The following is a 282-amino-acid chain: DNA-3-methyladenine glycosylase 2 (282 aa).

Catalysis depends on Asp238, which acts as the Proton acceptor.

It belongs to the alkylbase DNA glycosidase AlkA family. As to quaternary structure, monomer.

The catalysed reaction is Hydrolysis of alkylated DNA, releasing 3-methyladenine, 3-methylguanine, 7-methylguanine and 7-methyladenine.. Functionally, hydrolysis of the deoxyribose N-glycosidic bond to excise 3-methyladenine, 3-methylguanine, 7-methylguanine, O2-methylthymine, and O2-methylcytosine from the damaged DNA polymer formed by alkylation lesions. This chain is DNA-3-methyladenine glycosylase 2 (alkA), found in Escherichia coli (strain K12).